The primary structure comprises 207 residues: Pyridoxal 5'-phosphate synthase subunit PdxT (207 aa).

Position 53-55 (53-55) interacts with L-glutamine; sequence GES. The active-site Nucleophile is the Cys85. Residues Arg114 and 143–144 contribute to the L-glutamine site; that span reads IR. Active-site charge relay system residues include His184 and Glu186.

It belongs to the glutaminase PdxT/SNO family. In terms of assembly, in the presence of PdxS, forms a dodecamer of heterodimers. Only shows activity in the heterodimer.

The enzyme catalyses aldehydo-D-ribose 5-phosphate + D-glyceraldehyde 3-phosphate + L-glutamine = pyridoxal 5'-phosphate + L-glutamate + phosphate + 3 H2O + H(+). It carries out the reaction L-glutamine + H2O = L-glutamate + NH4(+). It participates in cofactor biosynthesis; pyridoxal 5'-phosphate biosynthesis. Catalyzes the hydrolysis of glutamine to glutamate and ammonia as part of the biosynthesis of pyridoxal 5'-phosphate. The resulting ammonia molecule is channeled to the active site of PdxS. This chain is Pyridoxal 5'-phosphate synthase subunit PdxT, found in Acidothermus cellulolyticus (strain ATCC 43068 / DSM 8971 / 11B).